A 265-amino-acid polypeptide reads, in one-letter code: Ribosomal RNA small subunit methyltransferase A (265 aa).

6 residues coordinate S-adenosyl-L-methionine: Asn-13, Leu-15, Gly-39, Glu-59, Asp-87, and Asn-108.

It belongs to the class I-like SAM-binding methyltransferase superfamily. rRNA adenine N(6)-methyltransferase family. RsmA subfamily.

The protein localises to the cytoplasm. The catalysed reaction is adenosine(1518)/adenosine(1519) in 16S rRNA + 4 S-adenosyl-L-methionine = N(6)-dimethyladenosine(1518)/N(6)-dimethyladenosine(1519) in 16S rRNA + 4 S-adenosyl-L-homocysteine + 4 H(+). Its function is as follows. Specifically dimethylates two adjacent adenosines (A1518 and A1519) in the loop of a conserved hairpin near the 3'-end of 16S rRNA in the 30S particle. May play a critical role in biogenesis of 30S subunits. This is Ribosomal RNA small subunit methyltransferase A from Aliarcobacter butzleri (strain RM4018) (Arcobacter butzleri).